The chain runs to 135 residues: Small ribosomal subunit protein bS16 (135 aa).

Residues 106–135 (TERRQKRLVVKSRRRQAKKEAEGKAAGAEA) form a disordered region. The segment covering 109-122 (RQKRLVVKSRRRQA) has biased composition (basic residues).

It belongs to the bacterial ribosomal protein bS16 family.

This chain is Small ribosomal subunit protein bS16, found in Chlorobium phaeobacteroides (strain DSM 266 / SMG 266 / 2430).